Reading from the N-terminus, the 79-residue chain is RNA-binding protein Hfq (79 aa).

A Sm domain is found at 10 to 70 (DVFLNTVRKQ…ISTIMPGQPV (61 aa)).

The protein belongs to the Hfq family. As to quaternary structure, homohexamer.

Functionally, RNA chaperone that binds small regulatory RNA (sRNAs) and mRNAs to facilitate mRNA translational regulation in response to envelope stress, environmental stress and changes in metabolite concentrations. Also binds with high specificity to tRNAs. The sequence is that of RNA-binding protein Hfq from Bartonella tribocorum (strain CIP 105476 / IBS 506).